The chain runs to 353 residues: Phosphate acyltransferase (353 aa).

Belongs to the PlsX family. In terms of assembly, homodimer. Probably interacts with PlsY.

It is found in the cytoplasm. The catalysed reaction is a fatty acyl-[ACP] + phosphate = an acyl phosphate + holo-[ACP]. It functions in the pathway lipid metabolism; phospholipid metabolism. Functionally, catalyzes the reversible formation of acyl-phosphate (acyl-PO(4)) from acyl-[acyl-carrier-protein] (acyl-ACP). This enzyme utilizes acyl-ACP as fatty acyl donor, but not acyl-CoA. This is Phosphate acyltransferase from Syntrophobacter fumaroxidans (strain DSM 10017 / MPOB).